The primary structure comprises 76 residues: Acyl carrier protein (76 aa).

One can recognise a Carrier domain in the interval 1–75 (MVLEKIKTLM…DVVLYIEKNL (75 aa)). Serine 35 bears the O-(pantetheine 4'-phosphoryl)serine mark.

It belongs to the acyl carrier protein (ACP) family. Post-translationally, 4'-phosphopantetheine is transferred from CoA to a specific serine of apo-ACP by AcpS. This modification is essential for activity because fatty acids are bound in thioester linkage to the sulfhydryl of the prosthetic group.

It localises to the cytoplasm. It functions in the pathway lipid metabolism; fatty acid biosynthesis. Carrier of the growing fatty acid chain in fatty acid biosynthesis. This Phytoplasma australiense protein is Acyl carrier protein.